The chain runs to 43 residues: METATFITIFISCLLVSVTGYALYTAFGKPSKQLRDPFEEHED.

The helical transmembrane segment at 5-27 (TFITIFISCLLVSVTGYALYTAF) threads the bilayer.

Belongs to the PsbN family.

Its subcellular location is the plastid. It is found in the chloroplast thylakoid membrane. Functionally, may play a role in photosystem I and II biogenesis. This Chara vulgaris (Common stonewort) protein is Protein PsbN.